Consider the following 448-residue polypeptide: MDTRKVKSSSRDAVNCLPDEILAKILSYLPTKRAVSTSLISKRWRNLFALMIQLFESQHHLYLDDSDLVYPEEGKGEMKDVQESFGDFVDKTLTDCNTIKKLSILCPLKCCAHKDIDQWLHHAMERGVVDLDMRFKMGFTPTQNEWPCNVFTIKTLVKLTFRIEVGQNKMPYCPKGVLPVLKSLFLHAIWFACERLCHSMLPGCPILEELFLHDLRGYRYNDSPNFSISHKTLKRLTVHFNNSFELGRPMQFDTPSLLYLEYSGFAPCRYSRTSYLNSLVEVKLDVHIRHECNTHMHLSPIIDWIGNVKTLSLSPASVKMMYSRCVELHVFSNLVKLYFESNEKEGWEVLPRLLNKSPKLETLVLKGLHCASDHGVCVDRNEVKVLEIYGFSGCGREVRQVKCLLREMQFLQVMKVEIDAHDDNKKLRVINHLLDLPKRPSKFHIQFL.

Positions arginine 11–glutamine 58 constitute an F-box domain. LRR repeat units lie at residues glutamine 82 to cysteine 106, phenylalanine 185 to aspartate 214, leucine 215 to phenylalanine 240, threonine 310 to serine 341, and asparagine 342 to glycine 367.

This Arabidopsis thaliana (Mouse-ear cress) protein is Putative F-box/LRR-repeat protein At5g25860.